Consider the following 308-residue polypeptide: UPF0282 protein STK_23220 (308 aa).

It belongs to the UPF0282 family.

This Sulfurisphaera tokodaii (strain DSM 16993 / JCM 10545 / NBRC 100140 / 7) (Sulfolobus tokodaii) protein is UPF0282 protein STK_23220.